The chain runs to 322 residues: DNA repair and recombination protein RadA (322 aa).

105–112 contacts ATP; sequence GMYGSGKT.

This sequence belongs to the eukaryotic RecA-like protein family.

Its function is as follows. Involved in DNA repair and in homologous recombination. Binds and assemble on single-stranded DNA to form a nucleoprotein filament. Hydrolyzes ATP in a ssDNA-dependent manner and promotes DNA strand exchange between homologous DNA molecules. In Methanococcus maripaludis (strain C6 / ATCC BAA-1332), this protein is DNA repair and recombination protein RadA.